We begin with the raw amino-acid sequence, 263 residues long: MPLHSVIVLVLVLCLGWKSNTQEESLSDFTICAEPGPVIPQGNFITIVCSTSGEYDTVRLEKEGSTFMEKKTEPHGKQHRFRIGPVNETITGYYNCIFEKNYVWSQRSNDLQLKVIKENVTQGLAPGPSMTSDTSWLKTYSIHILTVVSVIFLLCLSLFLFCFLSHRQKKQGLPNNKSQHQRSQERLNLATNGLEKTSDIVMDDSLSEDRQTETWTPVAGDLQEVTYAQLDHDSLTQRTVKDVTPQNRVIMAESSTYAAIMRC.

Residues 1–21 (MPLHSVIVLVLVLCLGWKSNT) form the signal peptide. The 86-residue stretch at 27 to 112 (SDFTICAEPG…VWSQRSNDLQ (86 aa)) folds into the Ig-like C2-type domain. Cys49 and Cys96 are oxidised to a cystine. The N-linked (GlcNAc...) asparagine glycan is linked to Asn87. The helical transmembrane segment at 144–164 (ILTVVSVIFLLCLSLFLFCFL) threads the bilayer. 2 consecutive short sequence motifs (ITIM motif) follow at residues 225-230 (VTYAQL) and 255-260 (STYAAI). 2 positions are modified to phosphotyrosine: Tyr227 and Tyr257.

Interacts with SH2 domains of tyrosine-protein phosphatases PTPN6 and PTPN11. The interaction with PTPN6 is constitutive. Interacts with the SH2 domain of CSK. Binds with high affinity to extracellular matrix collagens, the interaction is functionally important. In terms of processing, phosphorylation at Tyr-227 and Tyr-257 activates it. May be phosphorylated by LCK. Post-translationally, N-glycosylated. As to expression, expressed in lymphoid and non-lymphoid organs.

Its subcellular location is the membrane. In terms of biological role, functions as an inhibitory receptor that plays a constitutive negative regulatory role on cytolytic function of natural killer (NK) cells, B-cells and T-cells. Activation by Tyr phosphorylation results in recruitment and activation of the phosphatases PTPN6 and PTPN11. It also reduces the increase of intracellular calcium evoked by B-cell receptor ligation. May also play its inhibitory role independently of SH2-containing phosphatases. Modulates cytokine production in CD4+ T-cells, down-regulating IL2 and IFNG production while inducing secretion of transforming growth factor beta. Also down-regulates IgG and IgE production in B-cells as well as IL8, IL10 and TNF secretion. Inhibits proliferation and induces apoptosis in myeloid leukemia cell lines as well as prevents nuclear translocation of NF-kappa-B p65 subunit/RELA and phosphorylation of I-kappa-B alpha/CHUK in these cells. Inhibits the differentiation of peripheral blood precursors towards dendritic cells. The chain is Leukocyte-associated immunoglobulin-like receptor 1 (Lair1) from Rattus norvegicus (Rat).